The sequence spans 877 residues: DNA mismatch repair protein MutS (877 aa).

630 to 637 (GPNMAGKS) is an ATP binding site.

The protein belongs to the DNA mismatch repair MutS family.

This protein is involved in the repair of mismatches in DNA. It is possible that it carries out the mismatch recognition step. This protein has a weak ATPase activity. The polypeptide is DNA mismatch repair protein MutS (Ruegeria pomeroyi (strain ATCC 700808 / DSM 15171 / DSS-3) (Silicibacter pomeroyi)).